The primary structure comprises 254 residues: Trypsin (254 aa).

Residues 1 to 16 form the signal peptide; sequence MLRFIAVFALVNCALA. Residues 17-26 constitute a propeptide, activation peptide; sequence GTLPNDLDGR. Residues 27–252 enclose the Peptidase S1 domain; that stretch reads IVNGVDTTIE…VRSWIEKTAK (226 aa). A disulfide bridge connects residues Cys-53 and Cys-69. Active-site charge relay system residues include His-68 and Asp-113. 3 cysteine pairs are disulfide-bonded: Cys-154–Cys-158, Cys-178–Cys-195, and Cys-204–Cys-228. Ser-208 acts as the Charge relay system in catalysis.

This sequence belongs to the peptidase S1 family.

It is found in the secreted. The protein resides in the extracellular space. The catalysed reaction is Preferential cleavage: Arg-|-Xaa, Lys-|-Xaa.. In terms of biological role, involved in digestion of a protein meal. In Sarcophaga bullata (Grey flesh fly), this protein is Trypsin.